A 138-amino-acid chain; its full sequence is Proline-rich protein 34 (138 aa).

A compositionally biased stretch (pro residues) spans serine 22–glycine 37. 2 disordered regions span residues serine 22–glycine 55 and alanine 81–arginine 107.

In Homo sapiens (Human), this protein is Proline-rich protein 34 (PRR34).